We begin with the raw amino-acid sequence, 139 residues long: Large ribosomal subunit protein uL16 (139 aa).

Basic residues predominate over residues 1-16; sequence MLIPKRTKYRKQHRPV. The disordered stretch occupies residues 1–22; it reads MLIPKRTKYRKQHRPVRSGMSK.

The protein belongs to the universal ribosomal protein uL16 family. Part of the 50S ribosomal subunit.

In terms of biological role, binds 23S rRNA and is also seen to make contacts with the A and possibly P site tRNAs. The chain is Large ribosomal subunit protein uL16 from Bifidobacterium longum (strain DJO10A).